The primary structure comprises 675 residues: Methionine--tRNA ligase (675 aa).

The 'HIGH' region signature appears at 15–25 (PYANGSIHLGH). Zn(2+) contacts are provided by Cys-146, Cys-149, Cys-159, and Cys-162. Residues 332–336 (KMSKS) carry the 'KMSKS' region motif. Residue Lys-335 coordinates ATP. One can recognise a tRNA-binding domain in the interval 573–675 (DFAKVDMRIA…SGAQPGMQVK (103 aa)).

Belongs to the class-I aminoacyl-tRNA synthetase family. MetG type 1 subfamily. As to quaternary structure, homodimer. Zn(2+) is required as a cofactor.

It is found in the cytoplasm. The catalysed reaction is tRNA(Met) + L-methionine + ATP = L-methionyl-tRNA(Met) + AMP + diphosphate. Its function is as follows. Is required not only for elongation of protein synthesis but also for the initiation of all mRNA translation through initiator tRNA(fMet) aminoacylation. The sequence is that of Methionine--tRNA ligase from Yersinia pseudotuberculosis serotype IB (strain PB1/+).